Reading from the N-terminus, the 370-residue chain is tRNA (guanine(26)-N(2))-dimethyltransferase (370 aa).

A Trm1 methyltransferase domain is found at 4 to 368; it reads TWVTEGRTTI…APLEEIRDCI (365 aa). The S-adenosyl-L-methionine site is built by Arg-41, Arg-66, Asp-82, Asp-108, and Ala-109. Zn(2+) contacts are provided by Cys-237, Cys-240, Cys-256, and Cys-259.

The protein belongs to the class I-like SAM-binding methyltransferase superfamily. Trm1 family.

The catalysed reaction is guanosine(26) in tRNA + 2 S-adenosyl-L-methionine = N(2)-dimethylguanosine(26) in tRNA + 2 S-adenosyl-L-homocysteine + 2 H(+). Dimethylates a single guanine residue at position 26 of a number of tRNAs using S-adenosyl-L-methionine as donor of the methyl groups. The polypeptide is tRNA (guanine(26)-N(2))-dimethyltransferase (Methanospirillum hungatei JF-1 (strain ATCC 27890 / DSM 864 / NBRC 100397 / JF-1)).